The primary structure comprises 286 residues: Apoptosis inhibitor 1 (286 aa).

BIR repeat units lie at residues Leu29–Ala96 and Leu131–Val199. Residues Cys169, Cys172, His189, and Cys196 each contribute to the Zn(2+) site. The RING-type zinc-finger motif lies at Cys238 to Arg274.

Functionally, acts by blocking cellular apoptosis early in infection. Later, stimulates caspase-3-like protease activity and induces apoptosis, probably to favor the release of occluded virions. The chain is Apoptosis inhibitor 1 (IAP1) from Lepidoptera (butterflies and moths).